The chain runs to 344 residues: Interferon gamma receptor 1-like (344 aa).

The first 22 residues, Met-1–Gly-22, serve as a signal peptide directing secretion. At Phe-23 to Gly-229 the chain is on the extracellular side. The 79-residue stretch at Val-24–Glu-102 folds into the Fibronectin type-III domain. N-linked (GlcNAc...) asparagine glycosylation is found at Asn-29, Asn-44, Asn-132, and Asn-189. A helical transmembrane segment spans residues Ile-230 to Trp-250. At Leu-251 to Leu-344 the chain is on the cytoplasmic side. A disordered region spans residues Thr-300–Leu-344.

This sequence belongs to the type II cytokine receptor family. As to expression, highly expressed in brain. Also detected in spleen, heart, intestine, gill and kidney. In immune cell populations, detected at low levels in monocytes, peripheral blood leukocytes, splenocytes, neutrophils and mature macrophages.

It localises to the cell membrane. Functionally, receptor which shows binding specificity for the cytokine ifng1 (interferon gamma 1). In Carassius auratus (Goldfish), this protein is Interferon gamma receptor 1-like.